Consider the following 122-residue polypeptide: Copper metallothionein 1 (122 aa).

Residues 1-35 form a cys-rich copper-binding 1 region; the sequence is MACNCPPQKNTACCSTSEAQDKCTCQKGNCECKAC. The tract at residues 36-50 is spacer B1; the sequence is PNSTKTSESGGKAST. The interval 51-72 is cys-rich copper-binding 2; sequence CNCGGSGEACTCPPGQCACDKC. The interval 73 to 81 is spacer B2; sequence PKKAKSVST. Residues 82–103 form a cys-rich copper-binding 3 region; it reads CGCGGSGAACSCPPGKCACDNC. The spacer B3 stretch occupies residues 104 to 113; it reads PKQAQEKVSS. A cys-rich copper-binding 4 region spans residues 114 to 122; sequence CACSGSGAA.

This sequence belongs to the metallothionein superfamily.

It localises to the cytoplasm. The protein localises to the cell cortex. In terms of biological role, copper metallothionein that protects the cell against copper toxicity by tightly chelating copper ions. Required for antioxidant-mediated growth rescue in the presence of fluconazole. Acts as a critical factors for lung colonization and virulence. The protein is Copper metallothionein 1 of Cryptococcus neoformans var. grubii serotype A (strain H99 / ATCC 208821 / CBS 10515 / FGSC 9487) (Filobasidiella neoformans var. grubii).